We begin with the raw amino-acid sequence, 189 residues long: Transcription factor FapR (189 aa).

This sequence belongs to the FapR family.

Functionally, transcriptional factor involved in regulation of membrane lipid biosynthesis by repressing genes involved in fatty acid and phospholipid metabolism. In Exiguobacterium sibiricum (strain DSM 17290 / CCUG 55495 / CIP 109462 / JCM 13490 / 255-15), this protein is Transcription factor FapR.